A 642-amino-acid polypeptide reads, in one-letter code: Nocturnin (642 aa).

The tract at residues 50–87 is disordered; sequence LEDDDKPPQLFSVTDEPPSPNEEDYKPPNHHEDDGKLA. Residues 72–87 are compositionally biased toward basic and acidic residues; it reads EDYKPPNHHEDDGKLA. Glutamate 363 contacts Mg(2+). Substrate-binding positions include glutamate 363, asparagine 430, 453–456, 491–493, and histidine 600; these read HLKA and DFN. The interval 611–642 is disordered; that stretch reads PPTENGKESGSGSGSDGENETEVEGSKHGSIQ.

Belongs to the CCR4/nocturin family. As to quaternary structure, associates to the CCR4-NOT complex composed of at least Pop2/Caf1-55, Ccr4, Not1, Rga/Not2, and Not3. Mg(2+) is required as a cofactor. Expressed in the head, in the dorsal neurons DN3, a subgroup of clock neurons (at protein level). Ubiquitously expressed in both males and females.

The protein resides in the cytoplasm. It carries out the reaction NADP(+) + H2O = phosphate + NAD(+). It catalyses the reaction NADPH + H2O = phosphate + NADH. Phosphatase which catalyzes the conversion of NADP(+) to NAD(+) and of NADPH to NADH. Shows a small preference for NADPH over NADP(+). Because of its association with the CCR4-NOT complex, has a role in mRNA deadenylation and decay. Required at the pupal stage for proper wing morphogenesis after eclosion. Its function is as follows. Doesn't have a role in light-mediated behavioral response. Functionally, in dorsal neurons, contributes to the light-mediated behavioral response. This Drosophila melanogaster (Fruit fly) protein is Nocturnin.